Consider the following 271-residue polypeptide: tRNA pseudouridine synthase A (271 aa).

The active-site Nucleophile is the D52. Residue Y110 coordinates substrate.

The protein belongs to the tRNA pseudouridine synthase TruA family. In terms of assembly, homodimer.

The catalysed reaction is uridine(38/39/40) in tRNA = pseudouridine(38/39/40) in tRNA. Its function is as follows. Formation of pseudouridine at positions 38, 39 and 40 in the anticodon stem and loop of transfer RNAs. The protein is tRNA pseudouridine synthase A of Burkholderia mallei (strain NCTC 10247).